A 150-amino-acid chain; its full sequence is Large ribosomal subunit protein bL9 (150 aa).

The protein belongs to the bacterial ribosomal protein bL9 family.

Binds to the 23S rRNA. This chain is Large ribosomal subunit protein bL9, found in Neisseria gonorrhoeae.